We begin with the raw amino-acid sequence, 361 residues long: Peptide chain release factor 1 (361 aa).

At Q235 the chain carries N5-methylglutamine. Residues 283–306 (RSQQATAEAMTRKLQVGSGDRSQR) form a disordered region.

Belongs to the prokaryotic/mitochondrial release factor family. Methylated by PrmC. Methylation increases the termination efficiency of RF1.

The protein resides in the cytoplasm. Functionally, peptide chain release factor 1 directs the termination of translation in response to the peptide chain termination codons UAG and UAA. The protein is Peptide chain release factor 1 of Xylella fastidiosa (strain M23).